Here is a 686-residue protein sequence, read N- to C-terminus: MAPWSGFWAASRPALAAAAAGGTPVVVKMDNPNWSISEIDADGGEFLAGGRRRGRGKNAKQITWVLLLKAHRAAGCLAWLASAAVALGAAARRRVAAGRTDDADAETPAPRSRLYAFIRASLLLSVFLLAVELAAHANGRGRVLAASVDSFHSSWVRFRAAYVAPPLQLLADACVVLFLVQSADRLVQCLGCLYIHLNRIKPKPISSPAAAAAALPDLEDPDAGDYYPMVLVQIPMCNEKEVYQQSIAAVCNLDWPRSNILVQVLDDSDDPITQSLIKEEVEKWRQNGARIVYRHRVLREGYKAGNLKSAMSCSYVKDYEYVAIFDADFQPYPDFLKRTVPHFKDNEELGLVQARWSFVNKDENLLTRLQNINLCFHFEVEQQVNGIFINFFGFNGTAGVWRIKALEDSGGWMERTTVEDMDIAVRAHLNGWKFVFLNDVECQCELPESYEAYRKQQHRWHSGPMQLFRLCLPDIIRCKIAFWKKANLIFLFFLLRKLILPFYSFTLFCIILPMTMFIPEAELPDWVVCYIPALMSFLNILPAPKSFPFIIPYLLFENTMSVTKFNAMISGLFQLGSAYEWVVTKKSGRSSEGDLIALAPKELKQQKILDLTAIKEQSMLKQSSPRNEAKKKYNRIYKKELALSLLLLTAAARSLLSKQGIHFYFLMFQGLSFLLVGLDLIGEDVK.

2 helical membrane passes run 114-134 (LYAF…VELA) and 160-180 (AAYV…LFLV). D267 is a catalytic residue. Residues D326 and D328 each contribute to the substrate site. D420 is a catalytic residue. 4 consecutive transmembrane segments (helical) span residues 498-518 (LILP…TMFI), 523-543 (LPDW…ILPA), 640-656 (ELAL…RSLL), and 661-681 (IHFY…LDLI).

This sequence belongs to the glycosyltransferase 2 family. Plant cellulose synthase-like C subfamily.

The protein resides in the golgi apparatus membrane. Probable beta-1,4-glucan synthase rather involved in the synthesis of the xyloglucan backbone than cellulose. Seems to work simultaneously with xyloglucan 6-xylosyltransferase. Xyloglucan is a noncellulosic polysaccharides of plant cell wall and consists of a glucan backbone substituted by xylose, galactose and fucose. In Oryza sativa subsp. indica (Rice), this protein is Putative xyloglucan glycosyltransferase 10 (CSLC10).